We begin with the raw amino-acid sequence, 360 residues long: Glycoprotein-N-acetylgalactosamine 3-beta-galactosyltransferase 1 (360 aa).

Residues 1–7 are Cytoplasmic-facing; sequence MSIICAK. A helical; Signal-anchor for type II membrane protein membrane pass occupies residues 8–28; the sequence is VAWLPLTLGTAMGFLITFYLA. Residues 29-360 lie on the Lumenal side of the membrane; the sequence is RTLLERNSQP…SDFLEPPMES (332 aa). The cysteines at positions 79 and 103 are disulfide-linked. Residues Met82, Glu126, Gly127, Arg128, and Lys134 each coordinate UDP. Asn148 carries N-linked (GlcNAc...) asparagine glycosylation. Position 157 (Asp157) interacts with UDP. Mn(2+)-binding residues include Asp157 and Asp159. N-linked (GlcNAc...) asparagine glycosylation occurs at Asn173. Residues Cys220 and Cys234 are joined by a disulfide bond. Trp274 is a binding site for a glycoprotein. A disulfide bond links Cys289 and Cys290. UDP-binding residues include His298 and Tyr299. His298 serves as a coordination point for Mn(2+). Asn341 and Asn347 each carry an N-linked (GlcNAc...) asparagine glycan.

The protein belongs to the glycosyltransferase 31 family. Beta3-Gal-T subfamily. Homodimer; disulfide-linked. It depends on Mn(2+) as a cofactor.

It localises to the membrane. It carries out the reaction an N-acetyl-alpha-D-galactosaminyl derivative + UDP-alpha-D-galactose = a beta-D-galactosyl-(1-&gt;3)-N-acetyl-alpha-D-galactosaminyl derivative + UDP + H(+). The protein operates within protein modification; protein glycosylation. In terms of biological role, glycosyltransferase that generates the core 1 O-glycan Gal-beta1-3GalNAc-alpha1-Ser/Thr (T antigen), which is a precursor for many extended O-glycans in glycoproteins. This Xenopus laevis (African clawed frog) protein is Glycoprotein-N-acetylgalactosamine 3-beta-galactosyltransferase 1 (c1galt1).